The chain runs to 676 residues: Vitamin K-dependent protein S (676 aa).

The N-terminal stretch at 1–24 (MRVLGGRCGALLACLLLVLPVSEA) is a signal peptide. Positions 25–41 (NFLSKQQASQVLVRKRR) are excised as a propeptide. The Gla domain occupies 42-87 (ANSLLEETKQGNLERECIEELCNKEEAREVFENDPETDYFYPKYLV). 4-carboxyglutamate is present on residues Glu47, Glu48, Glu55, Glu57, Glu60, Glu61, Glu66, Glu67, Glu70, Glu73, and Glu77. Cysteines 58 and 63 form a disulfide. The segment at 88-116 (CLRSFQTGLFTAARQSTNAYPDLRSCVNA) is thrombin-sensitive. The 39-residue stretch at 117–155 (IPDQCSPLPCNEDGYMSCKDGKASFTCTCKPGWQGEKCE) folds into the EGF-like 1 domain. 13 cysteine pairs are disulfide-bonded: Cys121–Cys134, Cys126–Cys143, Cys145–Cys154, Cys161–Cys175, Cys171–Cys184, Cys186–Cys199, Cys205–Cys217, Cys212–Cys226, Cys228–Cys241, Cys247–Cys256, Cys252–Cys265, Cys267–Cys282, and Cys449–Cys475. A (3R)-3-hydroxyaspartate modification is found at Asp136. One can recognise an EGF-like 2; calcium-binding domain in the interval 157–200 (DINECKDPSNINGGCSQICDNTPGSYHCSCKNGFVMLSNKKDCK). The region spanning 201–242 (DVDECSLKPSICGTAVCKNIPGDFECECPEGYRYNLKSKSCE) is the EGF-like 3; calcium-binding domain. The EGF-like 4; calcium-binding domain maps to 243-283 (DIDECSENMCAQLCVNYPGGYTCYCDGKKGFKLAQDQKSCE). 2 Laminin G-like domains span residues 299-475 (LLYL…NKHC) and 484-666 (YYPG…AHSC). N-linked (GlcNAc...) asparagine glycans are attached at residues Asn499, Asn509, and Asn530. Cys639 and Cys666 are disulfide-bonded.

In terms of processing, the iron and 2-oxoglutarate dependent 3-hydroxylation of aspartate and asparagine is (R) stereospecific within EGF domains. Plasma.

The protein localises to the secreted. Its function is as follows. Anticoagulant plasma protein; it is a cofactor to activated protein C in the degradation of coagulation factors Va and VIIIa. It helps to prevent coagulation and stimulating fibrinolysis. This Homo sapiens (Human) protein is Vitamin K-dependent protein S (PROS1).